The following is a 693-amino-acid chain: Exocyst complex component 7 (693 aa).

Serine 236 bears the Phosphoserine mark. The segment at 236-259 (SWGHEALRPRHSGRQTEPKKTTSA) is disordered.

The protein belongs to the EXO70 family. In terms of assembly, the exocyst complex is composed of Sec3/Exoc1, Sec5/Exoc2, Sec6/Exoc3, Sec8/Exoc4, Sec10/Exoc5, Sec15/Exoc6, Exo70/Exoc7 and Exo84/Exoc8.

Its function is as follows. Required for exocytosis. Thought to function in intracellular vesicle targeting and docking before SNARE complex formation. The sequence is that of Exocyst complex component 7 from Drosophila melanogaster (Fruit fly).